A 522-amino-acid polypeptide reads, in one-letter code: 56 kDa type-specific antigen (522 aa).

Positions 1–22 (MKKIMLIASAMSALSLPFSASA) are cleaved as a signal peptide. The helical transmembrane segment at 67–87 (LTTMLPFGGTLAAGMTIAPGF) threads the bilayer. A disordered region spans residues 385 to 417 (AQEEGDDQSQVSCNDKKQQAVAEDSKAGSSKEG). Residues 398–417 (NDKKQQAVAEDSKAGSSKEG) show a composition bias toward basic and acidic residues. The chain crosses the membrane as a helical span at residues 470-490 (IGVVASGVLGVAINVADGVCV).

It localises to the cell membrane. In terms of biological role, may be an adherent factor for rickettsial adsorption to the host-cell surface and a determinant of virulence of individual rickettsial strain. It is the major outer membrane protein. This chain is 56 kDa type-specific antigen, found in Orientia tsutsugamushi (Rickettsia tsutsugamushi).